The primary structure comprises 310 residues: Nodulation protein D 2 (310 aa).

An HTH lysR-type domain is found at Leu6 to Thr63. Positions Leu23–Ala42 form a DNA-binding region, H-T-H motif.

It belongs to the LysR transcriptional regulatory family.

Functionally, nodD regulates the expression of the nodABCFE genes which encode other nodulation proteins. NodD is also a negative regulator of its own expression. Binds flavonoids as inducers. The protein is Nodulation protein D 2 (nodD2) of Rhizobium meliloti (strain 1021) (Ensifer meliloti).